The following is a 213-amino-acid chain: Thymidylate kinase (213 aa).

10–17 (GLEGAGKT) lines the ATP pocket.

The protein belongs to the thymidylate kinase family.

It carries out the reaction dTMP + ATP = dTDP + ADP. Functionally, phosphorylation of dTMP to form dTDP in both de novo and salvage pathways of dTTP synthesis. The polypeptide is Thymidylate kinase (Salmonella arizonae (strain ATCC BAA-731 / CDC346-86 / RSK2980)).